Consider the following 103-residue polypeptide: Large ribosomal subunit protein mL41 (103 aa).

The protein belongs to the mitochondrion-specific ribosomal protein mL41 family. Component of the mitochondrial large ribosomal subunit (mt-LSU). Mature N.crassa 74S mitochondrial ribosomes consist of a small (37S) and a large (54S) subunit. The 37S small subunit contains a 16S ribosomal RNA (16S mt-rRNA) and 32 different proteins. The 54S large subunit contains a 23S rRNA (23S mt-rRNA) and 42 different proteins.

The protein localises to the mitochondrion. Functionally, component of the mitochondrial ribosome (mitoribosome), a dedicated translation machinery responsible for the synthesis of mitochondrial genome-encoded proteins, including at least some of the essential transmembrane subunits of the mitochondrial respiratory chain. The mitoribosomes are attached to the mitochondrial inner membrane and translation products are cotranslationally integrated into the membrane. The protein is Large ribosomal subunit protein mL41 (mrpl27) of Neurospora crassa (strain ATCC 24698 / 74-OR23-1A / CBS 708.71 / DSM 1257 / FGSC 987).